The sequence spans 498 residues: ATP synthase subunit alpha 1 (498 aa).

Residue 164-171 participates in ATP binding; it reads GNRQSGKT.

Belongs to the ATPase alpha/beta chains family. F-type ATPases have 2 components, CF(1) - the catalytic core - and CF(0) - the membrane proton channel. CF(1) has five subunits: alpha(3), beta(3), gamma(1), delta(1), epsilon(1). CF(0) has three main subunits: a(1), b(2) and c(9-12). The alpha and beta chains form an alternating ring which encloses part of the gamma chain. CF(1) is attached to CF(0) by a central stalk formed by the gamma and epsilon chains, while a peripheral stalk is formed by the delta and b chains.

It is found in the cell membrane. The enzyme catalyses ATP + H2O + 4 H(+)(in) = ADP + phosphate + 5 H(+)(out). In terms of biological role, produces ATP from ADP in the presence of a proton gradient across the membrane. The alpha chain is a regulatory subunit. The chain is ATP synthase subunit alpha 1 from Listeria welshimeri serovar 6b (strain ATCC 35897 / DSM 20650 / CCUG 15529 / CIP 8149 / NCTC 11857 / SLCC 5334 / V8).